The sequence spans 543 residues: Chaperonin GroEL (543 aa).

Residues 30–33 (TLGP), Lys51, 87–91 (DGTTT), Gly415, 480–482 (NAL), and Asp496 contribute to the ATP site.

It belongs to the chaperonin (HSP60) family. As to quaternary structure, forms a cylinder of 14 subunits composed of two heptameric rings stacked back-to-back. Interacts with the co-chaperonin GroES.

Its subcellular location is the cytoplasm. It catalyses the reaction ATP + H2O + a folded polypeptide = ADP + phosphate + an unfolded polypeptide.. Together with its co-chaperonin GroES, plays an essential role in assisting protein folding. The GroEL-GroES system forms a nano-cage that allows encapsulation of the non-native substrate proteins and provides a physical environment optimized to promote and accelerate protein folding. This chain is Chaperonin GroEL, found in Gemmatimonas aurantiaca (strain DSM 14586 / JCM 11422 / NBRC 100505 / T-27).